Reading from the N-terminus, the 739-residue chain is Putative apoptosis-inducing factor 1, mitochondrial (739 aa).

The transit peptide at 1 to 42 (MSIWGVRCLTQRFIRQAYILANRRLLGPVPQRSPPAYAPLRP) directs the protein to the mitochondrion. The interval 257 to 564 (YLIIGGGTAA…ARRNLYVAGD (308 aa)) is FAD-dependent oxidoreductase. Residues 261 to 265 (GGGTA), R295, K300, V358, R410, D564, and 580 to 581 (HH) each bind FAD. The interval 644-681 (VDQLSESSDSDVPETSTSSSQSSKSDAGASQDGVTCDP) is disordered. Residues 656 to 676 (PETSTSSSQSSKSDAGASQDG) are compositionally biased toward low complexity.

It belongs to the FAD-dependent oxidoreductase family. It depends on FAD as a cofactor.

It localises to the mitochondrion intermembrane space. The catalysed reaction is A + NADH + H(+) = AH2 + NAD(+). In terms of biological role, probable NADH oxidoreductase. Mitochondrial effector of cell death that plays roles in developmentally regulated cell death and normal mitochondrial function. The protein is Putative apoptosis-inducing factor 1, mitochondrial (AIF) of Drosophila melanogaster (Fruit fly).